Consider the following 485-residue polypeptide: Regulatory protein ViaA (485 aa).

It belongs to the ViaA family. Homodimer. Interacts with RavA.

Its subcellular location is the cytoplasm. Its function is as follows. Component of the RavA-ViaA chaperone complex, which may act on the membrane to optimize the function of some of the respiratory chains. ViaA stimulates the ATPase activity of RavA. The sequence is that of Regulatory protein ViaA from Photorhabdus laumondii subsp. laumondii (strain DSM 15139 / CIP 105565 / TT01) (Photorhabdus luminescens subsp. laumondii).